The primary structure comprises 384 residues: N-acetylneuraminate epimerase (384 aa).

Positions 1 to 24 (MMKTKYLLLPLLASSSLLSHMAFA) are cleaved as a signal peptide. 7 Kelch repeats span residues 46 to 90 (KVYV…TVVG), 92 to 145 (NIFV…YSPD), 147 to 184 (KQVL…KIVD), 185 to 230 (DYMG…VIDG), 233 to 281 (ITLI…IAGA), 303 to 352 (AQFE…SVKG), and 354 to 383 (VLMV…IDIV). The active-site Proton acceptor is glutamate 239.

This sequence belongs to the NanM family. As to quaternary structure, homodimer.

The protein resides in the periplasm. The enzyme catalyses N-acetyl-alpha-neuraminate = N-acetyl-beta-neuraminate. Converts alpha-N-acetylneuranimic acid (Neu5Ac) to the beta-anomer, accelerating the equilibrium between the alpha- and beta-anomers. Probably facilitates sialidase-negative bacteria to compete successfully for limited amounts of extracellular Neu5Ac, which is likely taken up in the beta-anomer. In addition, the rapid removal of sialic acid from solution might be advantageous to the bacterium to damp down host responses. The sequence is that of N-acetylneuraminate epimerase from Vibrio vulnificus (strain YJ016).